We begin with the raw amino-acid sequence, 550 residues long: Chaperonin GroEL (550 aa).

ATP-binding positions include 30-33, K51, 87-91, G415, 479-481, and D495; these read TLGP, DGTTT, and NAA. Positions 526-550 are disordered; sequence KDEKSDLGNSSAPSAGGMGGMGGMM. The span at 541 to 550 shows a compositional bias: gly residues; sequence GGMGGMGGMM.

Belongs to the chaperonin (HSP60) family. In terms of assembly, forms a cylinder of 14 subunits composed of two heptameric rings stacked back-to-back. Interacts with the co-chaperonin GroES.

It is found in the cytoplasm. It carries out the reaction ATP + H2O + a folded polypeptide = ADP + phosphate + an unfolded polypeptide.. Its function is as follows. Together with its co-chaperonin GroES, plays an essential role in assisting protein folding. The GroEL-GroES system forms a nano-cage that allows encapsulation of the non-native substrate proteins and provides a physical environment optimized to promote and accelerate protein folding. The polypeptide is Chaperonin GroEL (Buchnera aphidicola subsp. Baizongia pistaciae (strain Bp)).